The following is a 213-amino-acid chain: Type II restriction enzyme BamHI (213 aa).

Mg(2+)-binding residues include Glu77, Asp94, Glu111, and Phe112. The active-site Proton acceptor is the Glu113.

In terms of assembly, homodimer. Mg(2+) is required as a cofactor.

It carries out the reaction Endonucleolytic cleavage of DNA to give specific double-stranded fragments with terminal 5'-phosphates.. In terms of biological role, a P subtype restriction enzyme that recognizes the double-stranded sequence 5'-GGATCC-3' and cleaves after G-1. The chain is Type II restriction enzyme BamHI from Bacillus amyloliquefaciens (Bacillus velezensis).